The following is a 178-amino-acid chain: Ribosome maturation factor RimP (178 aa).

This sequence belongs to the RimP family.

It localises to the cytoplasm. Functionally, required for maturation of 30S ribosomal subunits. This chain is Ribosome maturation factor RimP, found in Caulobacter vibrioides (strain ATCC 19089 / CIP 103742 / CB 15) (Caulobacter crescentus).